Here is a 290-residue protein sequence, read N- to C-terminus: PIH1 domain-containing protein 1 (290 aa).

Phosphoserine occurs at positions 12 and 173.

Belongs to the PIH1 family. As to quaternary structure, component of the R2TP complex composed at least of RUVBL1, RUVBL2, RPAP3 and PIHD1. Component of the PAQosome complex which is responsible for the biogenesis of several protein complexes and which consists of R2TP complex members RUVBL1, RUVBL2, RPAP3 and PIH1D1, URI complex members PFDN2, PFDN6, PDRG1, UXT and URI1 as well as ASDURF, POLR2E and DNAAF10/WDR92. Interacts with phosphorylated TELO2 and mediates interaction of TELO2 with the R2TP complex. Interacts with phosphorylated ECD, EFTUD2/SNRP116, RPB1 and UBR5 and with RPB1 in a phosphorylation-independent manner. Interacts with the core C/D box snoRNP particle components NOP58 and FBL and with RUVBL1/TIP49. Interacts with RPAP3 and DNAAF10. Interacts with histone H4 and with SWI/SNF complex member SMARCB1/SNF5. Interacts with the mTORC1 complex member RPTOR. Interacts with MSL1. In terms of tissue distribution, expressed at low levels in normal mammary epithelial cells (at protein level). Highest expression in lung, leukocyte and placenta. Expressed at lower levels in brain, prostate, colon, heart, small intestine, liver, ovary, pancreas, skeletal muscle, spleen, testis and thymus.

It is found in the nucleus. Functionally, involved in the assembly of C/D box small nucleolar ribonucleoprotein (snoRNP) particles. Recruits the SWI/SNF complex to the core promoter of rRNA genes and enhances pre-rRNA transcription. Mediates interaction of TELO2 with the R2TP complex which is necessary for the stability of MTOR and SMG1. Positively regulates the assembly and activity of the mTORC1 complex. This Homo sapiens (Human) protein is PIH1 domain-containing protein 1 (PIH1D1).